We begin with the raw amino-acid sequence, 330 residues long: 4-hydroxythreonine-4-phosphate dehydrogenase (330 aa).

Substrate is bound by residues His-133 and Thr-134. His-163, His-208, and His-263 together coordinate a divalent metal cation. Substrate is bound by residues Lys-271, Asn-280, and Arg-289.

This sequence belongs to the PdxA family. In terms of assembly, homodimer. Zn(2+) is required as a cofactor. Mg(2+) serves as cofactor. It depends on Co(2+) as a cofactor.

The protein localises to the cytoplasm. The catalysed reaction is 4-(phosphooxy)-L-threonine + NAD(+) = 3-amino-2-oxopropyl phosphate + CO2 + NADH. It functions in the pathway cofactor biosynthesis; pyridoxine 5'-phosphate biosynthesis; pyridoxine 5'-phosphate from D-erythrose 4-phosphate: step 4/5. In terms of biological role, catalyzes the NAD(P)-dependent oxidation of 4-(phosphooxy)-L-threonine (HTP) into 2-amino-3-oxo-4-(phosphooxy)butyric acid which spontaneously decarboxylates to form 3-amino-2-oxopropyl phosphate (AHAP). The chain is 4-hydroxythreonine-4-phosphate dehydrogenase from Azoarcus sp. (strain BH72).